Here is a 253-residue protein sequence, read N- to C-terminus: Triosephosphate isomerase (253 aa).

9–11 (NWK) provides a ligand contact to substrate. The active-site Electrophile is histidine 97. Glutamate 169 (proton acceptor) is an active-site residue. Substrate contacts are provided by residues glycine 175, serine 215, and 236-237 (GG).

The protein belongs to the triosephosphate isomerase family. In terms of assembly, homodimer.

Its subcellular location is the cytoplasm. It catalyses the reaction D-glyceraldehyde 3-phosphate = dihydroxyacetone phosphate. Its pathway is carbohydrate biosynthesis; gluconeogenesis. The protein operates within carbohydrate degradation; glycolysis; D-glyceraldehyde 3-phosphate from glycerone phosphate: step 1/1. Its function is as follows. Involved in the gluconeogenesis. Catalyzes stereospecifically the conversion of dihydroxyacetone phosphate (DHAP) to D-glyceraldehyde-3-phosphate (G3P). The protein is Triosephosphate isomerase of Staphylococcus saprophyticus subsp. saprophyticus (strain ATCC 15305 / DSM 20229 / NCIMB 8711 / NCTC 7292 / S-41).